The following is a 495-amino-acid chain: MFRSKRSGLVRRLWRSRVVPDREEGSGGGGGVDEDGSLGSRAEPAPRAREGGGCSRSEVRSVAPRRPRDAVGPRGAAIAGRRRRTGGLPRPVSESGAGAGGSPLDVAEPGGPGWLPESDCETVTCCLFSERDAAGAPRDSGDPQARQSPEPEEGGGPRSREARSRLLLLEQELKTVTYSLLKRLKERSLDTLLEAVESRGGVPGGCVLVPRADLRLGGQPAPPQLLLGRLFRWPDLQHAVELKPLCGCHSFTAAADGPTVCCNPYHFSRLCGPESPPPPYSRLSPPDQYKPLDLSDSTLSYTETEATNSLITAPGEFSDASMSPDATKPSHWCSVAYWEHRTRVGRLYAVYDQAVSIFYDLPQGSGFCLGQLNLEQRSESVRRTRSKIGFGILLSKEPDGVWAYNRGEHPIFVNSPTLDAPGGRALVVRKVPPGYSIKVFDFERSGLLQHADAAHGPYDPHSVRISFAKGWGPCYSRQFITSCPCWLEILLNNHR.

Residues 1 to 15 show a composition bias toward basic residues; it reads MFRSKRSGLVRRLWR. Disordered regions lie at residues 1–115 and 133–161; these read MFRS…PGWL and AAGA…RSRE. Dimethylated arginine; alternate occurs at positions 74 and 81. Omega-N-methylarginine; alternate is present on residues R74 and R81. In terms of domain architecture, MH1 spans 149-276; that stretch reads PEPEEGGGPR…FSRLCGPESP (128 aa). K174 is covalently cross-linked (Glycyl lysine isopeptide (Lys-Gly) (interchain with G-Cter in ubiquitin)). Zn(2+)-binding residues include C206, C248, C261, and H266. An MH2 domain is found at 332–495; the sequence is WCSVAYWEHR…WLEILLNNHR (164 aa). The residue at position 436 (S436) is a Phosphoserine; by PRKX; in vitro.

This sequence belongs to the dwarfin/SMAD family. Interacts with NEDD4L. Interacts with WWP1. Interacts with STAMBP and PRKX. Interacts with RNF111 and AXIN1. Interacts with TGF-beta type I receptor superfamily members, including ACVR1B, BMPR1B and TGFBR1. In response to BMP2 treatment, interacts with SMAD1; this interaction may inhibit SMAD1-binding to SMAD4. Interacts with HOXC8 and HOXC9. Interacts with PELI1; this interaction interferes with PELI1 complex formation with TRAF6, IRAK1, IRAK4 and MYD88 in response to IL1B and hence negatively regulates IL1R-TLR signaling. Interacts with TSC22D1/TSC-22. Monoubiquitinated at Lys-174 by the E2/E3 hybrid ubiquitin-protein ligase UBE2O, leading to reduced binding affinity for the activated BMP type I receptor ACVR1/ALK2, thereby enhancing BMP7 and regulating adipocyte differentiation. Ubiquitinated by WWP1. Ubiquitinated by ARK2C, promoting proteasomal degradation, leading to enhance the BMP-Smad signaling. In terms of processing, arginine methylation by PRMT1, which is recruited by BMPR2, initiates BMP-Induced signaling and induces dissociation from the BMPR1B receptor at the cell surface leading to derepress downstream Smad1/Smad5 signaling. Post-translationally, phosphorylated by BMP type 1 receptor kinase and by PRKX. Ubiquitous in various organs, with higher levels in lung.

It localises to the nucleus. Transforming growth factor-beta superfamily receptors signaling occurs through the Smad family of intracellular mediators. SMAD6 is an inhibitory Smad (i-Smad) that negatively regulates signaling downstream of type I transforming growth factor-beta. Acts as a mediator of TGF-beta and BMP anti-inflammatory activities. Suppresses IL1R-TLR signaling through its direct interaction with PEL1, preventing NF-kappa-B activation, nuclear transport and NF-kappa-B-mediated expression of pro-inflammatory genes. Blocks the BMP-SMAD1 signaling pathway by competing with SMAD4 for receptor-activated SMAD1-binding. Binds to regulatory elements in target promoter regions. The chain is Mothers against decapentaplegic homolog 6 (Smad6) from Mus musculus (Mouse).